The chain runs to 294 residues: Undecaprenyl-diphosphatase (294 aa).

6 helical membrane passes run 39 to 59, 93 to 113, 123 to 143, 198 to 218, 232 to 252, and 268 to 288; these read PGAA…ILYF, ATLG…GFTL, NLWI…VVDA, SFLM…VKAV, PTLV…IGFL, and IGLA…AIDP.

The protein belongs to the UppP family.

Its subcellular location is the cell membrane. The catalysed reaction is di-trans,octa-cis-undecaprenyl diphosphate + H2O = di-trans,octa-cis-undecaprenyl phosphate + phosphate + H(+). Its function is as follows. Catalyzes the dephosphorylation of undecaprenyl diphosphate (UPP). Confers resistance to bacitracin. This chain is Undecaprenyl-diphosphatase, found in Bifidobacterium longum subsp. infantis (strain ATCC 15697 / DSM 20088 / JCM 1222 / NCTC 11817 / S12).